A 519-amino-acid chain; its full sequence is F-box-like/WD repeat-containing protein TBL1XR1-A (519 aa).

A LisH domain is found at 4–36 (SSDEVNFLVYRYLQESGFSHSAFTFGIESHISQ). The region spanning 41–86 (GALAPPAALISIIQKGLQYVEAEVSINEDGTLFDGRPIESLSLIDA) is the F-box-like domain. The segment covering 115–139 (AAAAAATPNNQQPPAKNGENTANGE) has biased composition (low complexity). The interval 115-147 (AAAAAATPNNQQPPAKNGENTANGEENGGHALA) is disordered. WD repeat units follow at residues 172–211 (GHESEVFICAWNPVSDLLASGSGDSTARIWNLSENSTSGS), 228–267 (PSNKDVTSLDWNSEGTLLATGSYDGFARIWTKDGNLASTL), 269–308 (QHKGPIFALKWNKKGNFILSAGVDKTTIIWDAHTGEAKQQ), 311–349 (FHSAPALDVDWQSNNTFASCSTDMCIHVCKLGQDRPIKT), 352–391 (GHTNEVNAIKWDPTGNLLASCSDDMTLKIWSMKHDTCVHD), 394–442 (AHNK…CIHT), 445–484 (KHQEPVYSVAFSPDGRYLASGSFDKCVHIWNTQTGALVHS), and 486–519 (RGTGGIFEVCWNAAGDKVGASASDGSVCVLDLRK).

The protein belongs to the WD repeat EBI family. In terms of assembly, interacts with heterodimers of rxra and thrb, and this interaction is abrogated by thyroid hormone binding to thrb. Interacts with ncor1.

The protein localises to the nucleus. F-box-like protein which acts as an integral component of the N-CoR transcriptional corepressor complex. Probably regulates transcription activation mediated by nuclear receptors. May mediate the recruitment of the 19S proteasome complex, leading to the subsequent proteasomal degradation of the N-CoR complex, thereby allowing cofactor exchange and transcription activation. The polypeptide is F-box-like/WD repeat-containing protein TBL1XR1-A (tbl1xr1-a) (Xenopus laevis (African clawed frog)).